The following is a 210-amino-acid chain: Superoxide dismutase [Mn], mitochondrial (210 aa).

Residues His29, His77, Asp164, and His168 each coordinate Mn(2+).

Belongs to the iron/manganese superoxide dismutase family. Homotetramer. Requires Mn(2+) as cofactor.

It localises to the mitochondrion matrix. The catalysed reaction is 2 superoxide + 2 H(+) = H2O2 + O2. Destroys superoxide anion radicals which are normally produced within the cells and which are toxic to biological systems. The sequence is that of Superoxide dismutase [Mn], mitochondrial (sodB) from Aspergillus oryzae (strain ATCC 42149 / RIB 40) (Yellow koji mold).